Consider the following 604-residue polypeptide: Kelch-like protein 20 (604 aa).

One can recognise a BTB domain in the interval 63 to 130 (CDVVLVVGAK…AYTSQITVEE (68 aa)). The region spanning 165 to 267 (CLGIRAFADT…SPKFLVGTVG (103 aa)) is the BACK domain. 6 Kelch repeats span residues 314–360 (VLFA…VLDD), 362–408 (LYAV…VLGG), 409–455 (FLYA…VLGG), 457–502 (LYAV…VYQD), 504–549 (IYAV…VVNG), and 551–596 (LMAV…VIKM).

Component of the BCR(KLHL20) E3 ubiquitin ligase complex, at least composed of CUL3, KLHL20 and RBX1. Interacts with PDZ-RhoGEF/ARHGEF11, DAPK1, PML and CORO7. Interacts with F-actin. Interacts with IFN-gamma (IFNG). Interacts (via kelch repeats) with IVNS1ABP (via kelch repeats); this interaction blocks the assembly of CUL3-KLHL20 complex.

It localises to the cytoplasm. The protein resides in the perinuclear region. The protein localises to the nucleus. Its subcellular location is the golgi apparatus. It is found in the trans-Golgi network. It localises to the cell projection. The protein resides in the axon. The protein localises to the dendrite. The protein operates within protein modification; protein ubiquitination. Functionally, substrate-specific adapter of a BCR (BTB-CUL3-RBX1) E3 ubiquitin-protein ligase complex involved in interferon response and anterograde Golgi to endosome transport. The BCR(KLHL20) E3 ubiquitin ligase complex mediates the ubiquitination of DAPK1, leading to its degradation by the proteasome, thereby acting as a negative regulator of apoptosis. The BCR(KLHL20) E3 ubiquitin ligase complex also specifically mediates 'Lys-33'-linked ubiquitination. Involved in anterograde Golgi to endosome transport by mediating 'Lys-33'-linked ubiquitination of CORO7, promoting interaction between CORO7 and EPS15, thereby facilitating actin polymerization and post-Golgi trafficking. Also acts as a regulator of endothelial migration during angiogenesis by controlling the activation of Rho GTPases. The BCR(KLHL20) E3 ubiquitin ligase complex acts as a regulator of neurite outgrowth by mediating ubiquitination and degradation of PDZ-RhoGEF/ARHGEF11. The polypeptide is Kelch-like protein 20 (Klhl20) (Mus musculus (Mouse)).